The chain runs to 249 residues: MQFDVVTLFPEMFTAITQSGITRRAFEQKKCALSLWNPRDFTSDKHRTVDDRPYGGGPGMVMMVKPLEAAVQAAKARQTEQGLAAPRVVYLSPQGKALTHERVMQLTTEPGLVLLCGRYEAVDQRFLDSCVDEEISLGDFVLSGGEIPAMALMDAVIRQLPGVLHDDASAVEDSFVNGLLDCPHYTRPEVYEGAAVPAVLMGGHHVEIEKWRRERALEATARKRPDLIVKAREAGLLTRSDEKFLSSML.

S-adenosyl-L-methionine-binding positions include G117 and 137–142 (LGDFVL).

This sequence belongs to the RNA methyltransferase TrmD family. As to quaternary structure, homodimer.

It localises to the cytoplasm. The enzyme catalyses guanosine(37) in tRNA + S-adenosyl-L-methionine = N(1)-methylguanosine(37) in tRNA + S-adenosyl-L-homocysteine + H(+). Specifically methylates guanosine-37 in various tRNAs. The chain is tRNA (guanine-N(1)-)-methyltransferase from Janthinobacterium sp. (strain Marseille) (Minibacterium massiliensis).